The following is a 520-amino-acid chain: Putative hydrolase Mb2247c (520 aa).

Positions 1-34 (MAAMWRRRPLSSALLSFGLLLGGLPLAAPPLAGA) are cleaved as a signal peptide. A helical transmembrane segment spans residues 104-124 (FGALLVNPGGPGASAVDMVAA). One can recognise an AB hydrolase-1 domain in the interval 105-403 (GALLVNPGGP…APTPADPAAW (299 aa)). The Nucleophile role is filled by Ser-232. The active site involves Asp-461. The Proton donor role is filled by His-488.

This sequence belongs to the peptidase S33 family.

The protein localises to the cell membrane. This Mycobacterium bovis (strain ATCC BAA-935 / AF2122/97) protein is Putative hydrolase Mb2247c.